We begin with the raw amino-acid sequence, 413 residues long: uncharacterized protein (413 aa).

Residues 25–47 form a helical membrane-spanning segment; sequence IVNLSALLPLITSTTSTAGSIIT.

Its subcellular location is the host membrane. This is an uncharacterized protein from Acidianus sp. F28 (AFV-2).